The sequence spans 84 residues: Beta-defensin 119 (84 aa).

A signal peptide spans 1-21 (MKLLYLFLAILLAIEEPVISG). Disulfide bonds link C28-C55, C35-C49, and C39-C56.

This sequence belongs to the beta-defensin family.

The protein resides in the secreted. Its function is as follows. Has antibacterial activity. The chain is Beta-defensin 119 (DEFB119) from Gorilla gorilla gorilla (Western lowland gorilla).